The chain runs to 525 residues: GMP synthase [glutamine-hydrolyzing] (525 aa).

The region spanning 9–207 is the Glutamine amidotransferase type-1 domain; it reads RILILDFGSQ…VRDICQCEAL (199 aa). The active-site Nucleophile is C86. Active-site residues include H181 and E183. In terms of domain architecture, GMPS ATP-PPase spans 208-400; it reads WTPAKIIDDA…LGLPYDMLYR (193 aa). Residue 235-241 coordinates ATP; the sequence is SGGVDSS.

Homodimer.

The catalysed reaction is XMP + L-glutamine + ATP + H2O = GMP + L-glutamate + AMP + diphosphate + 2 H(+). It functions in the pathway purine metabolism; GMP biosynthesis; GMP from XMP (L-Gln route): step 1/1. Catalyzes the synthesis of GMP from XMP. This chain is GMP synthase [glutamine-hydrolyzing], found in Salmonella arizonae (strain ATCC BAA-731 / CDC346-86 / RSK2980).